We begin with the raw amino-acid sequence, 145 residues long: Protein SPMIP3 (145 aa).

The protein is Protein SPMIP3 of Mus musculus (Mouse).